Consider the following 108-residue polypeptide: Protein SMALL AUXIN UP-REGULATED RNA 51 (108 aa).

This sequence belongs to the ARG7 family. In terms of tissue distribution, expressed in organ primordia. Hardly observed in leaves.

Its subcellular location is the cell membrane. Functionally, provide a mechanistic link between auxin and plasma membrane H(+)-ATPases (PM H(+)-ATPases, e.g. AHA1 and AHA2), and triggers PM H(+)-ATPases activity by promoting phosphorylation of their C-terminal autoinhibitory domain as a result of PP2C-D subfamily of type 2C phosphatases inhibition, thus leading to the acidification of the apoplast and the facilitation of solutes and water uptake to drive cell expansion. Triggers plant growth probably by promoting cell elongation. Regulates branch angles and bending. The sequence is that of Protein SMALL AUXIN UP-REGULATED RNA 51 from Arabidopsis thaliana (Mouse-ear cress).